The sequence spans 248 residues: Probable transcriptional regulatory protein BH14810 (248 aa).

It belongs to the TACO1 family.

It is found in the cytoplasm. In Bartonella henselae (strain ATCC 49882 / DSM 28221 / CCUG 30454 / Houston 1) (Rochalimaea henselae), this protein is Probable transcriptional regulatory protein BH14810.